Consider the following 505-residue polypeptide: Forkhead box protein O4 (505 aa).

Residues 1–10 (MDPGNENSAT) show a composition bias toward polar residues. Disordered stretches follow at residues 1–100 (MDPG…RRNA) and 176–246 (SWWM…CSRN). Residue threonine 32 is modified to Phosphothreonine; by PKB/AKT1. Over residues 54 to 64 (LGEKVHTEGRS) the composition is skewed to basic and acidic residues. A DNA-binding region (fork-head) is located at residues 100-188 (AWGNQSYAEL…MLNPEGGKSG (89 aa)). A Phosphoserine; by PKB/AKT1 modification is found at serine 197. Basic residues predominate over residues 205 to 216 (LRGRSKAPKKKP). A Phosphoserine; by PKB/AKT1 modification is found at serine 262.

Interacts with CREBBP/CBP, CTNNB1, MYOCD, SIRT1, SRF and YWHAZ. Acetylated by CREBBP/CBP and deacetylated by SIRT1. Binding of YWHAZ inhibits DNA-binding. Interacts with USP7; the interaction is enhanced in presence of hydrogen peroxide and occurs independently of TP53. Interacts with NLK, and this inhibits monoubiquitination and transcriptional activity. Interacts with FOXK1; the interaction inhibits MEF2C transactivation activity. In terms of processing, acetylation by CREBBP/CBP, which is induced by peroxidase stress, inhibits transcriptional activity. Deacetylation by SIRT1 is NAD-dependent and stimulates transcriptional activity. Phosphorylation by PKB/AKT1 inhibits transcriptional activity and is responsible for cytoplasmic localization. May be phosphorylated at multiple sites by NLK. Post-translationally, monoubiquitinated; monoubiquitination is induced by oxidative stress and reduced by deacetylase inhibitors; results in its relocalization to the nucleus and its increased transcriptional activity. Deubiquitinated by USP7; deubiquitination is induced by oxidative stress; enhances its interaction with USP7 and consequently, deubiquitination; increases its translocation to the cytoplasm and inhibits its transcriptional activity. Hydrogene-peroxide-induced ubiquitination and USP7-mediated deubiquitination have no major effect on its protein stability. Heart, brain, placenta, lung, liver, skeletal muscle, kidney and pancreas. Isoform zeta is most abundant in the liver, kidney, and pancreas.

The protein localises to the cytoplasm. It is found in the nucleus. Its function is as follows. Transcription factor involved in the regulation of the insulin signaling pathway. Binds to insulin-response elements (IREs) and can activate transcription of IGFBP1. Down-regulates expression of HIF1A and suppresses hypoxia-induced transcriptional activation of HIF1A-modulated genes. Also involved in negative regulation of the cell cycle. Involved in increased proteasome activity in embryonic stem cells (ESCs) by activating expression of PSMD11 in ESCs, leading to enhanced assembly of the 26S proteasome, followed by higher proteasome activity. In Homo sapiens (Human), this protein is Forkhead box protein O4 (FOXO4).